A 416-amino-acid chain; its full sequence is Phosphoglycerate kinase (416 aa).

14 residues coordinate (2R)-3-phosphoglycerate: valine 23, aspartate 24, phenylalanine 25, asparagine 26, glutamine 38, arginine 39, serine 62, histidine 63, glycine 65, arginine 66, leucine 121, arginine 122, histidine 168, and arginine 169. Glycine 212 is a binding site for ADP. Glycine 212 is a binding site for CDP. 2 residues coordinate AMP: alanine 213 and lysine 214. Residue alanine 213 participates in ATP binding. Residue alanine 213 participates in Mg(2+) binding. Aspartate 217 is a CDP binding site. Aspartate 217 contacts Mg(2+). An AMP-binding site is contributed by lysine 218. Residue lysine 218 coordinates ATP. Glycine 236 is a binding site for ADP. Glycine 236 lines the CDP pocket. Positions 237 and 311 each coordinate AMP. The ATP site is built by glycine 237 and glycine 311. Positions 336 and 341 each coordinate CDP. Phenylalanine 341 contacts ADP. AMP is bound at residue glutamate 342. ATP is bound by residues glutamate 342, aspartate 373, and threonine 374. A Mg(2+)-binding site is contributed by aspartate 373.

Belongs to the phosphoglycerate kinase family. As to quaternary structure, monomer. It depends on Mg(2+) as a cofactor.

The protein resides in the cytoplasm. The protein localises to the mitochondrion. The enzyme catalyses (2R)-3-phosphoglycerate + ATP = (2R)-3-phospho-glyceroyl phosphate + ADP. The protein operates within carbohydrate degradation; glycolysis; pyruvate from D-glyceraldehyde 3-phosphate: step 2/5. In terms of biological role, catalyzes one of the two ATP producing reactions in the glycolytic pathway via the reversible conversion of 1,3-diphosphoglycerate to 3-phosphoglycerate. Both L- and D- forms of purine and pyrimidine nucleotides can be used as substrates, but the activity is much lower on pyrimidines. Negatively regulates the biosynthesis of acetyl-CoA from pyruvate in the mitochondrion. This is Phosphoglycerate kinase (PGK1) from Komagataella pastoris (Yeast).